The sequence spans 93 residues: Stromal cell-derived factor 1 (93 aa).

A signal peptide spans 1–21 (MDAKVVAVLALVLAALCISDG). Positions 22 to 23 (KP) match the Receptor activation motif motif. The segment at 29-33 (RCPCR) is receptor and heparin binding. Cystine bridges form between cysteine 30–cysteine 55 and cysteine 32–cysteine 71. Receptor binding regions lie at residues 39–41 (IAR), 48–50 (KIL), and 60–70 (VARLKNNNRQV). Heparin is bound by residues 41 to 51 (RANVKHLKILN), arginine 62, glutamine 69, and lysine 85.

The protein belongs to the intercrine alpha (chemokine CxC) family. Monomer or homodimer; in equilibrium. Dimer formation is induced by non acidic pH and the presence of multivalent anions, and by binding to CXCR4 or heparin. Monomeric form is required for full chemotactic activity and resistance to ischemia/reperfusion injury, whereas the dimeric form acts as a partial agonist of CXCR4, stimulating Ca2+ mobilization but with no chemotactic activity and instead acts as a selective antagonist that blocks chemotaxis induced by the monomeric form. Interacts with the N-terminus of ACKR3. Interacts with integrin subunit ITGB3 (via the allosteric site (site 2)). Interacts with TNFAIP6 (via Link domain). Highest expression levels detected in kidney, liver, spleen and muscle. Isoform Alpha is expressed ubiquitously but at varying levels, while isoform Beta displays tissue-specific expression, with expression detected in kidney, liver, heart, spleen and muscle but not in lung, colon, brain, skin and stomach.

It localises to the secreted. In terms of biological role, chemoattractant active on T-lymphocytes and monocytes but not neutrophils. Activates the C-X-C chemokine receptor CXCR4 to induce a rapid and transient rise in the level of intracellular calcium ions and chemotaxis. Also binds to atypical chemokine receptor ACKR3, which activates the beta-arrestin pathway and acts as a scavenger receptor for SDF-1. Binds to the allosteric site (site 2) of integrins and activates integrins ITGAV:ITGB3, ITGA4:ITGB1 and ITGA5:ITGB1 in a CXCR4-independent manner. Acts as a positive regulator of monocyte migration and a negative regulator of monocyte adhesion via the LYN kinase. Stimulates migration of monocytes and T-lymphocytes through its receptors, CXCR4 and ACKR3, and decreases monocyte adherence to surfaces coated with ICAM-1, a ligand for beta-2 integrins. SDF1A/CXCR4 signaling axis inhibits beta-2 integrin LFA-1 mediated adhesion of monocytes to ICAM-1 through LYN kinase. Plays a protective role after myocardial infarction. Induces down-regulation and internalization of ACKR3 expressed in various cells. Has several critical functions during embryonic development; required for B-cell lymphopoiesis, myelopoiesis in bone marrow and heart ventricular septum formation. Stimulates the proliferation of bone marrow-derived B-cell progenitors in the presence of IL7 as well as growth of stromal cell-dependent pre-B-cells. The polypeptide is Stromal cell-derived factor 1 (Cxcl12) (Mus musculus (Mouse)).